A 427-amino-acid chain; its full sequence is MSAIVDIIGREILDSRGNPTVECDVLLESGTMGRAAVPSGASTGSREAIELRDGEAGRYNGKGVLKAVEHINTEISEAIMGLDASEQAFLDKTLLELDGTDNKSRLGANAMLAVSMAVAKAAAEEAGLPLYRYFGGSGAMQLPVPMMNIVNGGAHANNSLDIQEFMIVPVSQPTFREALRCGAEVFHALKKILSDRGMSTAVGDEGGFAPNFGSNDECLSTILQAIEKAGYRAGEDVLLALDCAASEFYHDGKYQLAGEGLQLSSAEFTDYLATLADKFPIVSIEDGMHESDWEGWKLLTERLGKKVQLVGDDLFVTNTRILKEGIEKGIANSILIKINQIGTLTETFAAIEMAKRAGYTAVISHRSGETEDSTIADIAVGLNAGQIKTGSLSRSDRISKYNQLLRIEEDLGDIASYPGKSAFYNLR.

A (2R)-2-phosphoglycerate-binding site is contributed by Gln-163. Residue Glu-205 is the Proton donor of the active site. Mg(2+) is bound by residues Asp-242, Glu-285, and Asp-312. (2R)-2-phosphoglycerate contacts are provided by Lys-337, Arg-366, Ser-367, and Lys-388. The active-site Proton acceptor is the Lys-337.

The protein belongs to the enolase family. Mg(2+) serves as cofactor.

It localises to the cytoplasm. The protein resides in the secreted. Its subcellular location is the cell surface. It catalyses the reaction (2R)-2-phosphoglycerate = phosphoenolpyruvate + H2O. Its pathway is carbohydrate degradation; glycolysis; pyruvate from D-glyceraldehyde 3-phosphate: step 4/5. Functionally, catalyzes the reversible conversion of 2-phosphoglycerate (2-PG) into phosphoenolpyruvate (PEP). It is essential for the degradation of carbohydrates via glycolysis. This Burkholderia ambifaria (strain MC40-6) protein is Enolase.